The following is a 471-amino-acid chain: Heparan-sulfate 6-O-sulfotransferase 3 (471 aa).

At 1-4 (MDER) the chain is on the cytoplasmic side. A helical; Signal-anchor for type II membrane protein membrane pass occupies residues 5 to 27 (FNKWLLTPVLTLLFVVIMYQYVS). Residues 28–471 (PSCTSSCTNF…EDYNSQVVRW (444 aa)) lie on the Lumenal side of the membrane. Residues 39–122 (EQPRAGEAGP…EAPENGSLPR (84 aa)) are disordered. The segment covering 41–62 (PRAGEAGPPAVPGPARRAQAPP) has biased composition (low complexity). The span at 70–81 (QLPPPPRGPPEG) shows a compositional bias: pro residues. The segment covering 88–114 (PEEEDEEPGDPREGEEEEEEDEPDPEA) has biased composition (acidic residues). N-linked (GlcNAc...) asparagine glycans are attached at residues N117 and N128. 152–160 (HIQKTGGTT) provides a ligand contact to 3'-phosphoadenylyl sulfate. Residues 182–183 (KK), R199, W204, and H209 each bind substrate. Catalysis depends on H209, which acts as the Proton acceptor. N-linked (GlcNAc...) asparagine glycosylation occurs at N231. The 3'-phosphoadenylyl sulfate site is built by R245 and S253. Residues H257 and W264 each coordinate substrate. 2 N-linked (GlcNAc...) asparagine glycosylation sites follow: N324 and N329. 377 to 379 (TQF) serves as a coordination point for 3'-phosphoadenylyl sulfate. Residue N380 is glycosylated (N-linked (GlcNAc...) asparagine). 383–384 (RA) is a 3'-phosphoadenylyl sulfate binding site. Residues 422–471 (TKQLEHQRDRQKRREERRLQREHRDHQWPKEDGAAEGTVTEDYNSQVVRW) form a disordered region. Over residues 423–454 (KQLEHQRDRQKRREERRLQREHRDHQWPKEDG) the composition is skewed to basic and acidic residues. Polar residues predominate over residues 462–471 (EDYNSQVVRW).

It belongs to the sulfotransferase 6 family.

The protein localises to the membrane. The catalysed reaction is alpha-D-glucosaminyl-[heparan sulfate](n) + 3'-phosphoadenylyl sulfate = 6-sulfo-alpha-D-glucosaminyl-[heparan sulfate](n) + adenosine 3',5'-bisphosphate + H(+). In terms of biological role, 6-O-sulfation enzyme which catalyzes the transfer of sulfate from 3'-phosphoadenosine 5'-phosphosulfate (PAPS) to position 6 of the N-sulfoglucosamine residue (GlcNS) of heparan sulfate. The sequence is that of Heparan-sulfate 6-O-sulfotransferase 3 (HS6ST3) from Homo sapiens (Human).